A 483-amino-acid polypeptide reads, in one-letter code: Zinc metalloproteinase/disintegrin VMP-II (483 aa).

The first 20 residues, 1–20 (MIQVLLVTLCLAAFPYQGNS), serve as a signal peptide directing secretion. Residues 21–191 (IILESGNVND…KASQLNLTPE (171 aa)) constitute a propeptide that is removed on maturation. In terms of domain architecture, Peptidase M12B spans 198–394 (RYIELVVVAD…HNPQCMLNEP (197 aa)). Residues E201 and D285 each coordinate Ca(2+). Disulfide bonds link C309-C389, C349-C373, and C351-C356. H334 provides a ligand contact to Zn(2+). E335 is an active-site residue. Zn(2+) is bound by residues H338 and H344. Ca(2+) contacts are provided by C389 and N392. The propeptide occupies 395-414 (LRTDIVSTPVSGNELWETGE). Residues 402 to 483 (TPVSGNELWE…AGCPRNPFHA (82 aa)) enclose the Disintegrin domain. 4 cysteine pairs are disulfide-bonded: C425–C448, C439–C445, C444–C469, and C457–C476. The Cell attachment site; atypical (KGD) signature appears at 461 to 463 (KGD).

This sequence belongs to the venom metalloproteinase (M12B) family. P-II subfamily. P-IIe sub-subfamily. As to quaternary structure, heterodimer; disulfide-linked (disintegrin). It depends on Zn(2+) as a cofactor. Expressed by the venom gland.

It localises to the secreted. Inhibited by EDTA and 1,10-phenanthroline, but not by PMSF. Its function is as follows. Has fibrinolytic activity. The recombinant enzyme cleaves both alpha- (FGA) and beta-chains (FGB) of fibrinogen, but not the gamma-chain. The recombinant protein does not produce hemorrhage in mice and does not have effect on ADP- or collagen-stimulated platelet aggregation. In terms of biological role, inhibits platelet aggregation induced by ADP, thrombin, platelet-activating factor and collagen. Acts by inhibiting fibrinogen interaction with platelet receptors GPIIb/GPIIIa (ITGA2B/ITGB3). The protein is Zinc metalloproteinase/disintegrin VMP-II of Agkistrodon piscivorus leucostoma (Western cottonmouth).